Consider the following 1273-residue polypeptide: Ras-specific guanine nucleotide-releasing factor 1 (1273 aa).

The PH 1 domain maps to 22–129 (DGTRKGYLSK…WVAAIAHASY (108 aa)). Residues 204 to 229 (KKIKKVQSFLRGWLCRRKWKTIIQDY) form the IQ domain. Residues 240-426 (KRNQVVFSML…EELSRIMHDE (187 aa)) form the DH domain. In terms of domain architecture, PH 2 spans 467–584 (PMSEKGKITR…WTSDISQCVD (118 aa)). A phosphoserine; by PLK2 mark is found at Ser-577 and Ser-626. In terms of domain architecture, N-terminal Ras-GEF spans 644 to 761 (KVLQIRYASV…SRRRKLSLNI (118 aa)). The tract at residues 724-754 (YGEPPKSPRATRKFSSPPPLSITKTSSPSRR) is disordered. Residue Ser-758 is modified to Phosphoserine. 2 positions are modified to phosphoserine; by PLK2: Ser-779 and Ser-800. The interval 809-874 (TNKIPDEGDT…PKSVKNKNSS (66 aa)) is disordered. The segment covering 842-854 (SDIDQNQSDDGDT) has biased composition (acidic residues). Residues 855–867 (ETSPTKSPTTPKS) show a composition bias toward low complexity. In terms of domain architecture, Ras-GEF spans 1038–1270 (SALEIAEQLT…YESSLRIEPK (233 aa)).

As to quaternary structure, homooligomer and heterooligomer with RASGRF2. Interacts with USP8, thereby regulating its stability. In terms of processing, phosphorylated by PLK2, leading to ubiquitination and degradation by the proteasome. Post-translationally, ubiquitinated and degraded following phosphorylation by PLK2. Phosphorylated by SRC and LCK. Phosphorylation by LCK increases its capacity to stimulate the GDP/GTP exchange on Ras, whereas its phosphorylation by SRC seems not to have an effect on stimulation activity.

Promotes the exchange of Ras-bound GDP by GTP. The polypeptide is Ras-specific guanine nucleotide-releasing factor 1 (RASGRF1) (Homo sapiens (Human)).